The sequence spans 436 residues: Anaerobic glycerol-3-phosphate dehydrogenase subunit B (436 aa).

The protein belongs to the anaerobic G-3-P dehydrogenase subunit B family. As to quaternary structure, composed of a catalytic GlpA/B dimer and of membrane bound GlpC. The cofactor is FMN.

The enzyme catalyses a quinone + sn-glycerol 3-phosphate = dihydroxyacetone phosphate + a quinol. The protein operates within polyol metabolism; glycerol degradation via glycerol kinase pathway; glycerone phosphate from sn-glycerol 3-phosphate (anaerobic route): step 1/1. Its function is as follows. Conversion of glycerol 3-phosphate to dihydroxyacetone. Uses fumarate or nitrate as electron acceptor. The chain is Anaerobic glycerol-3-phosphate dehydrogenase subunit B from Vibrio cholerae serotype O1 (strain ATCC 39541 / Classical Ogawa 395 / O395).